The primary structure comprises 212 residues: ATP-dependent dethiobiotin synthetase BioD (212 aa).

An ATP-binding site is contributed by 13–18 (GIGKTV). A Mg(2+)-binding site is contributed by threonine 17. Residue lysine 33 is part of the active site. Serine 37 is a substrate binding site. Glutamate 100 lines the Mg(2+) pocket. Residues 100 to 103 (EGAG) and 184 to 186 (PRL) each bind ATP.

It belongs to the dethiobiotin synthetase family. In terms of assembly, homodimer. The cofactor is Mg(2+).

The protein localises to the cytoplasm. It carries out the reaction (7R,8S)-7,8-diammoniononanoate + CO2 + ATP = (4R,5S)-dethiobiotin + ADP + phosphate + 3 H(+). The protein operates within cofactor biosynthesis; biotin biosynthesis; biotin from 7,8-diaminononanoate: step 1/2. In terms of biological role, catalyzes a mechanistically unusual reaction, the ATP-dependent insertion of CO2 between the N7 and N8 nitrogen atoms of 7,8-diaminopelargonic acid (DAPA, also called 7,8-diammoniononanoate) to form a ureido ring. The sequence is that of ATP-dependent dethiobiotin synthetase BioD from Rhodopseudomonas palustris (strain TIE-1).